A 160-amino-acid chain; its full sequence is Cyclic pyranopterin monophosphate synthase (160 aa).

Residues 75–77 and 113–114 contribute to the substrate site; these read LCH and ME. Residue Asp-128 is part of the active site.

It belongs to the MoaC family. In terms of assembly, homohexamer; trimer of dimers.

It carries out the reaction (8S)-3',8-cyclo-7,8-dihydroguanosine 5'-triphosphate = cyclic pyranopterin phosphate + diphosphate. It functions in the pathway cofactor biosynthesis; molybdopterin biosynthesis. Functionally, catalyzes the conversion of (8S)-3',8-cyclo-7,8-dihydroguanosine 5'-triphosphate to cyclic pyranopterin monophosphate (cPMP). The polypeptide is Cyclic pyranopterin monophosphate synthase (Beijerinckia indica subsp. indica (strain ATCC 9039 / DSM 1715 / NCIMB 8712)).